Consider the following 106-residue polypeptide: Large ribosomal subunit protein uL24 (106 aa).

It belongs to the universal ribosomal protein uL24 family. In terms of assembly, part of the 50S ribosomal subunit.

One of two assembly initiator proteins, it binds directly to the 5'-end of the 23S rRNA, where it nucleates assembly of the 50S subunit. Its function is as follows. One of the proteins that surrounds the polypeptide exit tunnel on the outside of the subunit. The polypeptide is Large ribosomal subunit protein uL24 (Polaromonas sp. (strain JS666 / ATCC BAA-500)).